The sequence spans 323 residues: Annexin A3 (323 aa).

Alanine 2 carries the post-translational modification N-acetylalanine. 4 Annexin repeats span residues phenylalanine 18–threonine 89, alanine 90–aspartate 161, histidine 173–histidine 245, and asparagine 249–glycine 320. The residue at position 177 (lysine 177) is an N6-acetyllysine. At threonine 267 the chain carries Phosphothreonine.

This sequence belongs to the annexin family.

Its function is as follows. Inhibitor of phospholipase A2, also possesses anti-coagulant properties. The sequence is that of Annexin A3 (Anxa3) from Mus musculus (Mouse).